A 373-amino-acid chain; its full sequence is Gibberellin 3-beta-dioxygenase 2 (373 aa).

The region spanning 203 to 304 (MTATVHLNWY…RVSLGYFLGP (102 aa)) is the Fe2OG dioxygenase domain. A 2-oxoglutarate-binding site is contributed by tyrosine 212. Fe cation-binding residues include histidine 227, aspartate 229, and histidine 285. 2-oxoglutarate-binding residues include arginine 295 and serine 297.

Belongs to the iron/ascorbate-dependent oxidoreductase family. L-ascorbate serves as cofactor. Requires Fe(2+) as cofactor. In terms of tissue distribution, highly expressed in elongating leaves. Expressed in unopened flowers. Expressed at low levels in leaf blades, shoots, rachis, stems and young panicles.

The enzyme catalyses gibberellin A20 + 2-oxoglutarate + O2 = gibberellin A1 + succinate + CO2. It participates in plant hormone biosynthesis; gibberellin biosynthesis. In terms of biological role, catalyzes the 3-beta-hydroxylation of the inactive gibberellin precursors, leading to the formation of bioactive gibberellins. In vitro, converts the precursors GA20, GA5, GA44 and GA9 to the corresponding 3-beta-hydroxylated active products GA1, GA3, GA38 and GA4, respectively. Involved in the production of bioactive GA for vegetative growth and development. Controls the elongation of the vegetative shoot and plant height by the regulation of active gibberellin levels. This chain is Gibberellin 3-beta-dioxygenase 2, found in Oryza sativa subsp. japonica (Rice).